The primary structure comprises 493 residues: Glutamate--tRNA ligase (493 aa).

A 'HIGH' region motif is present at residues Pro-10–Thr-20. Positions Lys-251–Arg-255 match the 'KMSKS' region motif. ATP is bound at residue Lys-254.

This sequence belongs to the class-I aminoacyl-tRNA synthetase family. Glutamate--tRNA ligase type 1 subfamily. As to quaternary structure, monomer.

The protein localises to the cytoplasm. The enzyme catalyses tRNA(Glu) + L-glutamate + ATP = L-glutamyl-tRNA(Glu) + AMP + diphosphate. In terms of biological role, catalyzes the attachment of glutamate to tRNA(Glu) in a two-step reaction: glutamate is first activated by ATP to form Glu-AMP and then transferred to the acceptor end of tRNA(Glu). This is Glutamate--tRNA ligase from Pseudomonas entomophila (strain L48).